A 352-amino-acid chain; its full sequence is UDP-N-acetylglucosamine--N-acetylmuramyl-(pentapeptide) pyrophosphoryl-undecaprenol N-acetylglucosamine transferase 2 (352 aa).

UDP-N-acetyl-alpha-D-glucosamine is bound by residues 11-13, R164, S194, and Q289; that span reads SAG.

Belongs to the glycosyltransferase 28 family. MurG subfamily.

It localises to the cell membrane. It catalyses the reaction di-trans,octa-cis-undecaprenyl diphospho-N-acetyl-alpha-D-muramoyl-L-alanyl-D-glutamyl-meso-2,6-diaminopimeloyl-D-alanyl-D-alanine + UDP-N-acetyl-alpha-D-glucosamine = di-trans,octa-cis-undecaprenyl diphospho-[N-acetyl-alpha-D-glucosaminyl-(1-&gt;4)]-N-acetyl-alpha-D-muramoyl-L-alanyl-D-glutamyl-meso-2,6-diaminopimeloyl-D-alanyl-D-alanine + UDP + H(+). Its pathway is cell wall biogenesis; peptidoglycan biosynthesis. In terms of biological role, cell wall formation. Catalyzes the transfer of a GlcNAc subunit on undecaprenyl-pyrophosphoryl-MurNAc-pentapeptide (lipid intermediate I) to form undecaprenyl-pyrophosphoryl-MurNAc-(pentapeptide)GlcNAc (lipid intermediate II). The sequence is that of UDP-N-acetylglucosamine--N-acetylmuramyl-(pentapeptide) pyrophosphoryl-undecaprenol N-acetylglucosamine transferase 2 from Bacillus anthracis.